Reading from the N-terminus, the 371-residue chain is 3-dehydroquinate synthase (371 aa).

NAD(+)-binding positions include 70–75 (DAEDGK), 104–108 (GAVTD), 128–129 (TT), Lys-141, and Lys-150. Zn(2+)-binding residues include Glu-183, His-246, and His-262.

It belongs to the sugar phosphate cyclases superfamily. Dehydroquinate synthase family. It depends on Co(2+) as a cofactor. The cofactor is Zn(2+). Requires NAD(+) as cofactor.

The protein resides in the cytoplasm. The enzyme catalyses 7-phospho-2-dehydro-3-deoxy-D-arabino-heptonate = 3-dehydroquinate + phosphate. It participates in metabolic intermediate biosynthesis; chorismate biosynthesis; chorismate from D-erythrose 4-phosphate and phosphoenolpyruvate: step 2/7. Its function is as follows. Catalyzes the conversion of 3-deoxy-D-arabino-heptulosonate 7-phosphate (DAHP) to dehydroquinate (DHQ). The chain is 3-dehydroquinate synthase from Saccharopolyspora erythraea (strain ATCC 11635 / DSM 40517 / JCM 4748 / NBRC 13426 / NCIMB 8594 / NRRL 2338).